The primary structure comprises 209 residues: Octanoyltransferase (209 aa).

Residues 30 to 209 enclose the BPL/LPL catalytic domain; sequence DHEPEIIYLV…IQTEFNKIFK (180 aa). Residues 69–76, 143–145, and 156–158 each bind substrate; these read RGGKFTFH, AIG, and GVA. Cys174 functions as the Acyl-thioester intermediate in the catalytic mechanism.

The protein belongs to the LipB family.

Its subcellular location is the cytoplasm. The enzyme catalyses octanoyl-[ACP] + L-lysyl-[protein] = N(6)-octanoyl-L-lysyl-[protein] + holo-[ACP] + H(+). Its pathway is protein modification; protein lipoylation via endogenous pathway; protein N(6)-(lipoyl)lysine from octanoyl-[acyl-carrier-protein]: step 1/2. Its function is as follows. Catalyzes the transfer of endogenously produced octanoic acid from octanoyl-acyl-carrier-protein onto the lipoyl domains of lipoate-dependent enzymes. Lipoyl-ACP can also act as a substrate although octanoyl-ACP is likely to be the physiological substrate. In Rickettsia rickettsii (strain Iowa), this protein is Octanoyltransferase.